Here is a 354-residue protein sequence, read N- to C-terminus: GTPase Obg (354 aa).

An Obg domain is found at 1–159 (MQFIDHAEIE…KQLRLELKLL (159 aa)). In terms of domain architecture, OBG-type G spans 160–328 (AEVGIIGLPN…LLQEIWDVLD (169 aa)). Residues 166–173 (GLPNAGKS), 191–195 (FTTLI), 213–216 (DIPG), 280–283 (NKLD), and 309–311 (SAV) contribute to the GTP site. Mg(2+)-binding residues include Ser-173 and Thr-193.

This sequence belongs to the TRAFAC class OBG-HflX-like GTPase superfamily. OBG GTPase family. In terms of assembly, monomer. It depends on Mg(2+) as a cofactor.

It localises to the cytoplasm. Functionally, an essential GTPase which binds GTP, GDP and possibly (p)ppGpp with moderate affinity, with high nucleotide exchange rates and a fairly low GTP hydrolysis rate. Plays a role in control of the cell cycle, stress response, ribosome biogenesis and in those bacteria that undergo differentiation, in morphogenesis control. The polypeptide is GTPase Obg (Picosynechococcus sp. (strain ATCC 27264 / PCC 7002 / PR-6) (Agmenellum quadruplicatum)).